We begin with the raw amino-acid sequence, 185 residues long: Ribosome-recycling factor (185 aa).

A disordered region spans residues alanine 138 to glycine 185.

The protein belongs to the RRF family.

The protein resides in the cytoplasm. In terms of biological role, responsible for the release of ribosomes from messenger RNA at the termination of protein biosynthesis. May increase the efficiency of translation by recycling ribosomes from one round of translation to another. This Lactobacillus delbrueckii subsp. bulgaricus (strain ATCC 11842 / DSM 20081 / BCRC 10696 / JCM 1002 / NBRC 13953 / NCIMB 11778 / NCTC 12712 / WDCM 00102 / Lb 14) protein is Ribosome-recycling factor.